A 591-amino-acid chain; its full sequence is MKRSSSVSVEDEKSARRKLDVVPKLHFVGCSHLTDYHLMEKLGEGTFGEVYKSQRRKDGKVYALKRILMHTEKEGFPITAIREIKILKSIKHENIIPLSDMTVVRADKKHRRRGSIYMVTPYMDHDLSGLLENPSVKFTEPQIKCYMKQLFAGTKYLHDQLILHRDLKAANLLIDNHGILKIADFGLARVITEESYANKNPGLPPPNRREYTGCVVTRWYRSPELLLGERRYTTAIDMWSVGCIMAEMYKGRPILQGSSDLDQLDKIFRLCGSPTQATMPNWEKLPGCEGVRSFPSHPRTLETAFFTFGKEMTSLCGAILTLNPDERLSASMALEHEYFTTPPYPANPSELQSYSASHEYDKRRKREQRDANSHAFEQTANGKRQFRFMTRGPSDPWYGIRRPNYNSQPQYQRGSYNREGGNMDRSRNVNYQPKRQQNFKPLTSDLPQKNSEFSETNAMNQTSNHSHADGQRYYRPEQDRSQRLRNPSDYGRQGRQSSQSQQPAWNVSSRYQNNSKVQTTSRASENADTNKTQHNIKYIDSYVPEYSIARQSANQKTNEQHPSSTSLHQQSTSDLKSPSFHENSNVDDTPK.

Residues 1–385 (MKRSSSVSVE…FEQTANGKRQ (385 aa)) form an interaction with pch1 region. Residues 36-339 (YHLMEKLGEG…ASMALEHEYF (304 aa)) enclose the Protein kinase domain. Residues 42–50 (LGEGTFGEV) and Lys-65 each bind ATP. Asp-166 (proton acceptor) is an active-site residue. A Phosphotyrosine modification is found at Tyr-211. Residue Thr-212 is modified to Phosphothreonine. 2 disordered regions span residues 341–534 (TPPY…KTQH) and 549–591 (ARQS…DTPK). The span at 358–372 (HEYDKRRKREQRDAN) shows a compositional bias: basic and acidic residues. Composition is skewed to polar residues over residues 404–415 (NYNSQPQYQRGS) and 428–465 (NVNYQPKRQQNFKPLTSDLPQKNSEFSETNAMNQTSNH). The segment at 442–523 (LTSDLPQKNS…NSKVQTTSRA (82 aa)) is binds to pct1. Basic and acidic residues predominate over residues 466 to 482 (SHADGQRYYRPEQDRSQ). Low complexity predominate over residues 491–502 (GRQGRQSSQSQQ). Residues 503 to 534 (PAWNVSSRYQNNSKVQTTSRASENADTNKTQH) show a composition bias toward polar residues. The residue at position 565 (Thr-565) is a Phosphothreonine. At Ser-577 the chain carries Phosphoserine.

It belongs to the protein kinase superfamily. CMGC Ser/Thr protein kinase family. CDC2/CDKX subfamily. Interacts with pch1 cyclin via its N-terminal domain. Via its C-terminal domain, interacts with RNA triphosphatase pct1 which is involved in mRNA capping. Also interacts with pcm1.

It localises to the nucleus. It catalyses the reaction L-seryl-[protein] + ATP = O-phospho-L-seryl-[protein] + ADP + H(+). It carries out the reaction L-threonyl-[protein] + ATP = O-phospho-L-threonyl-[protein] + ADP + H(+). The enzyme catalyses [DNA-directed RNA polymerase] + ATP = phospho-[DNA-directed RNA polymerase] + ADP + H(+). With respect to regulation, may be activated by autophosphorylation or phosphorylation by a separate activating kinase. In terms of biological role, component of the positive transcription elongation factor b (P-TEFb) which consists of cdk9 and pch1, and which phosphorylates the C-terminal domain (CTD) of RNA polymerase II and spt5. The protein is Probable cyclin-dependent kinase 9 (cdk9) of Schizosaccharomyces pombe (strain 972 / ATCC 24843) (Fission yeast).